The primary structure comprises 689 residues: DNA ligase (689 aa).

NAD(+) is bound by residues 40-44 (DAEYD), 89-90 (SL), and E121. The N6-AMP-lysine intermediate role is filled by K123. The NAD(+) site is built by R144, E179, K295, and K319. Zn(2+) contacts are provided by C413, C416, C431, and C437. Positions 610-689 (RAQSSLTGKI…EEWLTLIKNA (80 aa)) constitute a BRCT domain.

Belongs to the NAD-dependent DNA ligase family. LigA subfamily. Requires Mg(2+) as cofactor. It depends on Mn(2+) as a cofactor.

It carries out the reaction NAD(+) + (deoxyribonucleotide)n-3'-hydroxyl + 5'-phospho-(deoxyribonucleotide)m = (deoxyribonucleotide)n+m + AMP + beta-nicotinamide D-nucleotide.. In terms of biological role, DNA ligase that catalyzes the formation of phosphodiester linkages between 5'-phosphoryl and 3'-hydroxyl groups in double-stranded DNA using NAD as a coenzyme and as the energy source for the reaction. It is essential for DNA replication and repair of damaged DNA. The polypeptide is DNA ligase (Rickettsia akari (strain Hartford)).